A 210-amino-acid polypeptide reads, in one-letter code: Cytochrome c oxidase subunit 2 (210 aa).

The Mitochondrial intermembrane portion of the chain corresponds to 1-15 (MSFILTFWMIFLMDS). The helical transmembrane segment at 16–36 (IIVLISFSIFLSVWICALIIA) threads the bilayer. Residues 37 to 63 (TVLTVTKINNIYCTWDFISSKFIDTYW) lie on the Mitochondrial matrix side of the membrane. Residues 64–84 (FVLGMMFILCLLLRLCLLLYF) traverse the membrane as a helical segment. Over 85-210 (SCINFVSFDL…GFMPIVINFI (126 aa)) the chain is Mitochondrial intermembrane. The Cu cation site is built by H157, C192, E194, C196, H200, and M203. Residue E194 participates in Mg(2+) binding.

Belongs to the cytochrome c oxidase subunit 2 family. In terms of assembly, component of the cytochrome c oxidase (complex IV, CIV), a multisubunit enzyme composed of a catalytic core of 3 subunits and several supernumerary subunits. The complex exists as a monomer or a dimer and forms supercomplexes (SCs) in the inner mitochondrial membrane with ubiquinol-cytochrome c oxidoreductase (cytochrome b-c1 complex, complex III, CIII). Cu cation is required as a cofactor.

Its subcellular location is the mitochondrion inner membrane. It carries out the reaction 4 Fe(II)-[cytochrome c] + O2 + 8 H(+)(in) = 4 Fe(III)-[cytochrome c] + 2 H2O + 4 H(+)(out). Component of the cytochrome c oxidase, the last enzyme in the mitochondrial electron transport chain which drives oxidative phosphorylation. The respiratory chain contains 3 multisubunit complexes succinate dehydrogenase (complex II, CII), ubiquinol-cytochrome c oxidoreductase (cytochrome b-c1 complex, complex III, CIII) and cytochrome c oxidase (complex IV, CIV), that cooperate to transfer electrons derived from NADH and succinate to molecular oxygen, creating an electrochemical gradient over the inner membrane that drives transmembrane transport and the ATP synthase. Cytochrome c oxidase is the component of the respiratory chain that catalyzes the reduction of oxygen to water. Electrons originating from reduced cytochrome c in the intermembrane space (IMS) are transferred via the dinuclear copper A center (CU(A)) of subunit 2 and heme A of subunit 1 to the active site in subunit 1, a binuclear center (BNC) formed by heme A3 and copper B (CU(B)). The BNC reduces molecular oxygen to 2 water molecules using 4 electrons from cytochrome c in the IMS and 4 protons from the mitochondrial matrix. In Trypanosoma brucei brucei, this protein is Cytochrome c oxidase subunit 2 (COXII).